The primary structure comprises 473 residues: 3-isopropylmalate dehydratase large subunit (473 aa).

Positions 351, 414, and 417 each coordinate [4Fe-4S] cluster.

Belongs to the aconitase/IPM isomerase family. LeuC type 1 subfamily. In terms of assembly, heterodimer of LeuC and LeuD. [4Fe-4S] cluster is required as a cofactor.

It carries out the reaction (2R,3S)-3-isopropylmalate = (2S)-2-isopropylmalate. The protein operates within amino-acid biosynthesis; L-leucine biosynthesis; L-leucine from 3-methyl-2-oxobutanoate: step 2/4. Catalyzes the isomerization between 2-isopropylmalate and 3-isopropylmalate, via the formation of 2-isopropylmaleate. In Polaromonas sp. (strain JS666 / ATCC BAA-500), this protein is 3-isopropylmalate dehydratase large subunit.